Reading from the N-terminus, the 118-residue chain is uncharacterized protein (118 aa).

The next 4 helical transmembrane spans lie at 5–20 (IVFY…SVVM), 25–42 (VIRT…LLYF), 53–73 (ALAI…FIIL), and 83–103 (LFFT…SLSI).

Its subcellular location is the cell membrane. This is an uncharacterized protein from Bacillus subtilis (strain 168).